Reading from the N-terminus, the 225-residue chain is Type II restriction enzyme BslI subunit alpha (225 aa).

2 C4-type zinc fingers span residues 36–53 (CKDCGQYWHTSLSECYFC) and 63–84 (CNSCGKKYSLTSSSKSCDTDGC).

In terms of assembly, heterotetramer of two alpha and two beta subunits. The alpha subunit is believed to be responsible for DNA recognition, while the beta subunit is thought to mediate cleavage. Zn(2+) is required as a cofactor.

The catalysed reaction is Endonucleolytic cleavage of DNA to give specific double-stranded fragments with terminal 5'-phosphates.. A P subtype restriction enzyme that recognizes the double-stranded sequence 5'-CCN(7)GG-3' and cleaves after N-7. The polypeptide is Type II restriction enzyme BslI subunit alpha (Bacillus sp. (strain NEB-606)).